The primary structure comprises 105 residues: Large ribosomal subunit protein uL23 (105 aa).

This sequence belongs to the universal ribosomal protein uL23 family. Part of the 50S ribosomal subunit. Contacts protein L29, and trigger factor when it is bound to the ribosome.

One of the early assembly proteins it binds 23S rRNA. One of the proteins that surrounds the polypeptide exit tunnel on the outside of the ribosome. Forms the main docking site for trigger factor binding to the ribosome. This is Large ribosomal subunit protein uL23 from Ureaplasma parvum serovar 3 (strain ATCC 27815 / 27 / NCTC 11736).